Consider the following 219-residue polypeptide: MKEKIIKAVVLGDVTIGKTSLLVTKKIGFPLEYIPTIFDNHYFEIKINDQIMRIGCWDTGGGEEYPRPLSYPQTNLFLILFSISSRNSFNNCETYWLPEVTKFLPSVPIILVGTKTDLRNCDDYKDKSTFVTYEEGLEMKDKINASAYLECSSLLNKGVDDLFDTMAIIGNNDLKSIIPNQLLRDHYNQSQRSEIYEAQRNNYENNNNNNNNNNKCIIC.

Residue 12–19 (GDVTIGKT) participates in GTP binding. The Effector region signature appears at 33 to 41 (YIPTIFDNH). GTP is bound by residues 58-62 (DTGGG) and 114-117 (TKTD). At Cys216 the chain carries Cysteine methyl ester. A lipid anchor (S-geranylgeranyl cysteine) is attached at Cys216. The propeptide at 217–219 (IIC) is removed in mature form.

This sequence belongs to the small GTPase superfamily. Rho family.

The protein localises to the cell membrane. The sequence is that of Rho-related protein racN (racN) from Dictyostelium discoideum (Social amoeba).